The chain runs to 70 residues: Large ribosomal subunit protein bL31 (70 aa).

The Zn(2+) site is built by C16, C18, C37, and C40.

This sequence belongs to the bacterial ribosomal protein bL31 family. Type A subfamily. As to quaternary structure, part of the 50S ribosomal subunit. It depends on Zn(2+) as a cofactor.

Its function is as follows. Binds the 23S rRNA. This is Large ribosomal subunit protein bL31 from Haemophilus influenzae (strain 86-028NP).